The primary structure comprises 1181 residues: HEAT repeat-containing protein 6 (1181 aa).

Residues 159–198 form an HEAT 1 repeat; the sequence is PELLGNTGLLMKLSDLAQSDPEVRRAAVHCMANLCLSVPG. 2 disordered regions span residues 292–347 and 371–390; these read QYDG…PVTG and LDGS…SSSS. Positions 300–312 are enriched in polar residues; the sequence is KPQQSESSASRPT. The segment covering 313-325 has biased composition (basic residues); the sequence is LNKKKKSKVKPKK. Serine 336 and serine 337 each carry phosphoserine. Serine 399 and serine 402 each carry phosphoserine. 3 HEAT repeats span residues 452–490, 515–552, and 558–595; these read ELGS…GSKQ, SIRE…NAPY, and SLLT…THAP. The disordered stretch occupies residues 613-646; sequence NSNSATPHLSPPDWWKKAPAGPSLEETSVSSPKG. Threonine 618 is subject to Phosphothreonine. Over residues 637 to 646 the composition is skewed to polar residues; the sequence is EETSVSSPKG. Serine 643 is modified (phosphoserine).

As to expression, amplified in breast cancer cell lines MCF-7 and BT-474.

Its function is as follows. Amplification-dependent oncogene. In Homo sapiens (Human), this protein is HEAT repeat-containing protein 6 (HEATR6).